We begin with the raw amino-acid sequence, 308 residues long: Uricase (308 aa).

Active-site charge relay system residues include lysine 5 and threonine 65. Urate-binding residues include threonine 65, aspartate 66, phenylalanine 177, arginine 194, isoleucine 242, glutamine 243, and asparagine 269. The tract at residues 283–308 is disordered; it reads ASVLREPPAPTGFQQFSMDRGDLDEQ.

It belongs to the uricase family.

The enzyme catalyses urate + O2 + H2O = 5-hydroxyisourate + H2O2. Its pathway is purine metabolism; urate degradation; (S)-allantoin from urate: step 1/3. Catalyzes the oxidation of uric acid to 5-hydroxyisourate, which is further processed to form (S)-allantoin. This chain is Uricase, found in Haloferax volcanii (strain ATCC 29605 / DSM 3757 / JCM 8879 / NBRC 14742 / NCIMB 2012 / VKM B-1768 / DS2) (Halobacterium volcanii).